Consider the following 125-residue polypeptide: Secreted RxLR effector protein 22 (125 aa).

Residues 1 to 26 form the signal peptide; the sequence is MRLIYSALVTAAAMVAISNGSTPARG. Residues 21-66 form a disordered region; it reads STPARGNEVETRSLRGGNEVDSSMSDDGERAARGGGRVRSQASGVT. The short motif at 32-50 is the RxLR-dEER element; that stretch reads RSLRGGNEVDSSMSDDGER.

Belongs to the RxLR effector family.

The protein resides in the secreted. It is found in the host nucleus. Functionally, effector that acts as a broad suppressor of cell death to interrupt plant immunity. Inhibits cell death induced by cell death-inducing proteins, including the PAMP elicitor INF1 from P.infestans. The protein is Secreted RxLR effector protein 22 of Plasmopara viticola (Downy mildew of grapevine).